The following is a 607-amino-acid chain: Autophagy-related protein 16-1 (607 aa).

Residues 13–43 (WKRHISEQLRRRDRLQRQAFEEIILQYNKLL) form an interaction with ATG5 region. A coiled-coil region spans residues 78–230 (NDNQLQEMAQ…QKELAEAAKE (153 aa)). Serine 139 carries the phosphoserine; by CK2 modification. Positions 207-230 (AENEKDSRRRQARLQKELAEAAKE) are WIPI2-binding. The tract at residues 230–242 (EPLPVEQDDDIEV) is RB1CC1-binding. Residues serine 269 and serine 287 each carry the phosphoserine modification. Positions 296 to 299 (DNVD) match the Caspase cleavage motif. WD repeat units lie at residues 320–359 (AHDGEVNAVQFSPGSRLLATGGMDRRVKLWEVFGEKCEFK), 364–403 (GSNAGITSIEFDSAGSYLLAASNDFASRIWTVDDYRLRHT), 406–445 (GHSGKVLSAKFLLDNARIVSGSHDRTLKLWDLRSKVCIKT), 447–484 (FAGSSCNDIVCTEQCVMSGHFDKKIRFWDIRSESIVRE), 486–525 (ELLGKITALDLNPERTELLSCSRDDLLKVIDLRTNAIKQT), 532–573 (KCGS…KVLS), and 575–607 (QHSSSINAVAWSPSGSHVVSVDKGCKAVLWAQY).

This sequence belongs to the WD repeat ATG16 family. In terms of assembly, homodimer. Homooligomer. Heterooligomer with ATG16L2. Interacts with WIPI1. Interacts with WIPI2. Interacts with RB1CC1; the interaction is required for ULK1 complex-dependent autophagy. Interacts with ATG5. Part of the minor complex composed of 4 sets of ATG12-ATG5 and ATG16L1 (400 kDa); this complex interacts with ATG3 leading to disruption of ATG7 interaction and promotion of ATG8-like proteins lipidation. Part of the major complex composed of 8 sets of ATG12-ATG5 and ATG16L1 (800 kDa). Interacts with RAB33B (GTP- and GDP-bound forms); the complex consists of a tetramer where two RAB33B molecules bind independently one molecule of the ATG16L1 homodimer; the interaction promotes ATG12-ATG5-ATG16L1 complex recruitment to phagophores. Interacts (via WD repeats) with TMEM59; the interaction mediates unconventional autophagic activity of TMEM59. Interacts with TLR2. Interacts (via WD repeats) with MEFV. Interacts with PPP1CA; the interaction dephosphorylates ATG16L1 causing dissociation of ATG12-ATG5-ATG16L1 complex. Interacts (via N-terminal) with CLTC. Interacts with NOD1. Interacts with NOD2. Interacts with TUFM. Interacts with TRIM16. Interacts (via WD repeats) with SPATA33. Interacts with IRGM. In terms of processing, proteolytic cleavage by activated CASP3 leads to degradation and may regulate autophagy upon cellular stress and apoptotic stimuli. Post-translationally, phosphorylation at Ser-139 promotes association with the ATG12-ATG5 conjugate to form the ATG12-ATG5-ATG16L1 complex.

It is found in the cytoplasm. It localises to the preautophagosomal structure membrane. The protein localises to the endosome membrane. The protein resides in the lysosome membrane. In terms of biological role, plays an essential role in both canonical and non-canonical autophagy: interacts with ATG12-ATG5 to mediate the lipidation to ATG8 family proteins (MAP1LC3A, MAP1LC3B, MAP1LC3C, GABARAPL1, GABARAPL2 and GABARAP). Acts as a molecular hub, coordinating autophagy pathways via distinct domains that support either canonical or non-canonical signaling. During canonical autophagy, interacts with ATG12-ATG5 to mediate the conjugation of phosphatidylethanolamine (PE) to ATG8 proteins, to produce a membrane-bound activated form of ATG8. Thereby, controls the elongation of the nascent autophagosomal membrane. As part of the ATG8 conjugation system with ATG5 and ATG12, required for recruitment of LRRK2 to stressed lysosomes and induction of LRRK2 kinase activity in response to lysosomal stress. Also involved in non-canonical autophagy, a parallel pathway involving conjugation of ATG8 proteins to single membranes at endolysosomal compartments, probably by catalyzing conjugation of phosphatidylserine (PS) to ATG8. Non-canonical autophagy plays a key role in epithelial cells to limit lethal infection by influenza A (IAV) virus. Regulates mitochondrial antiviral signaling (MAVS)-dependent type I interferon (IFN-I) production. Negatively regulates NOD1- and NOD2-driven inflammatory cytokine response. Instead, promotes an autophagy-dependent antibacterial pathway together with NOD1 or NOD2. Plays a role in regulating morphology and function of Paneth cell. This chain is Autophagy-related protein 16-1, found in Homo sapiens (Human).